The chain runs to 464 residues: tRNA modification GTPase MnmE (464 aa).

(6S)-5-formyl-5,6,7,8-tetrahydrofolate contacts are provided by Arg-27, Glu-90, and Lys-129. The TrmE-type G domain maps to 222 to 384 (GVALVLAGSV…LYDKIRALIS (163 aa)). Residues 232–237 (NAGKSS), 251–257 (SSYPGTT), and 276–279 (DTAG) contribute to the GTP site. Residues Ser-236 and Thr-257 each contribute to the Mg(2+) site. Residue Lys-464 coordinates (6S)-5-formyl-5,6,7,8-tetrahydrofolate.

Belongs to the TRAFAC class TrmE-Era-EngA-EngB-Septin-like GTPase superfamily. TrmE GTPase family. As to quaternary structure, homodimer. Heterotetramer of two MnmE and two MnmG subunits. The cofactor is K(+).

It localises to the cytoplasm. Exhibits a very high intrinsic GTPase hydrolysis rate. Involved in the addition of a carboxymethylaminomethyl (cmnm) group at the wobble position (U34) of certain tRNAs, forming tRNA-cmnm(5)s(2)U34. The protein is tRNA modification GTPase MnmE of Borreliella burgdorferi (strain ATCC 35210 / DSM 4680 / CIP 102532 / B31) (Borrelia burgdorferi).